Here is a 182-residue protein sequence, read N- to C-terminus: Bifunctional protein PyrR (182 aa).

Positions 99–111 (VVLVDDVLFTGRT) match the PRPP-binding motif.

It belongs to the purine/pyrimidine phosphoribosyltransferase family. PyrR subfamily.

The catalysed reaction is UMP + diphosphate = 5-phospho-alpha-D-ribose 1-diphosphate + uracil. Functionally, regulates the transcription of the pyrimidine nucleotide (pyr) operon in response to exogenous pyrimidines. In terms of biological role, also displays a weak uracil phosphoribosyltransferase activity which is not physiologically significant. The chain is Bifunctional protein PyrR from Chloroflexus aurantiacus (strain ATCC 29366 / DSM 635 / J-10-fl).